The chain runs to 86 residues: Elongation factor 1-beta (86 aa).

The protein belongs to the EF-1-beta/EF-1-delta family.

Functionally, promotes the exchange of GDP for GTP in EF-1-alpha/GDP, thus allowing the regeneration of EF-1-alpha/GTP that could then be used to form the ternary complex EF-1-alpha/GTP/AAtRNA. This Methanocorpusculum labreanum (strain ATCC 43576 / DSM 4855 / Z) protein is Elongation factor 1-beta.